The primary structure comprises 91 residues: Defensin-like protein 95 (91 aa).

Residues 1-27 (MGSLKLSTFAIVVCLSILLISPIEVNG) form the signal peptide. Intrachain disulfides connect Cys-31-Cys-76, Cys-38-Cys-63, Cys-47-Cys-73, and Cys-51-Cys-75.

It belongs to the DEFL family.

It is found in the secreted. The chain is Defensin-like protein 95 from Arabidopsis thaliana (Mouse-ear cress).